Consider the following 68-residue polypeptide: UPF0352 protein CPS_2611 (68 aa).

It belongs to the UPF0352 family.

The sequence is that of UPF0352 protein CPS_2611 from Colwellia psychrerythraea (strain 34H / ATCC BAA-681) (Vibrio psychroerythus).